The primary structure comprises 121 residues: Chromosome transmission fidelity protein 8 homolog (121 aa).

It belongs to the CTF8 family. In terms of assembly, component of the CTF18-RFC complex, which consists of CTF18, CTF8, DSCC1, RFC2, RFC3, RFC4 and RFC5. The CTF18-RFC complex does not interact with the Rad9/Rad1/Hus1 complex. The CTF18-RFC complex interacts with POLH. CTF18/CTF8/DSCC1 associate with PCNA. CTF8 exists as a dimer with DSCC1.

The protein resides in the nucleus. Chromosome cohesion factor involved in sister chromatid cohesion and fidelity of chromosome transmission. Component of one of the cell nuclear antigen loader complexes, CTF18-replication factor C (CTF18-RFC), which consists of CTF18, CTF8, DSCC1, RFC2, RFC3, RFC4 and RFC5. The CTF18-RFC complex binds to single-stranded and primed DNAs and has weak ATPase activity that is stimulated the presence of primed DNA, replication protein A (RPA) and proliferating cell nuclear antigen (PCNA). The CTF18-RFC complex catalyzes the ATP-dependent loading of PCNA onto primed and gapped DNA. It also interacts with and stimulates POLH, which is suggestive of a protein network that coordinates DNA repair, recombination and chromosome cohesion reactions with replication fork progression. In Homo sapiens (Human), this protein is Chromosome transmission fidelity protein 8 homolog.